The primary structure comprises 373 residues: Flagellar P-ring protein (373 aa).

Residues 1–27 (MPSFSPTLLKLAAAALSALLLSGVAAS) form the signal peptide.

This sequence belongs to the FlgI family. In terms of assembly, the basal body constitutes a major portion of the flagellar organelle and consists of four rings (L,P,S, and M) mounted on a central rod.

It localises to the periplasm. Its subcellular location is the bacterial flagellum basal body. Assembles around the rod to form the L-ring and probably protects the motor/basal body from shearing forces during rotation. This Rhodopseudomonas palustris (strain BisB5) protein is Flagellar P-ring protein.